The sequence spans 385 residues: Meiotic recombination protein SPO11-2 (385 aa).

The Topo IIA-type catalytic domain occupies 24-169 (LPPAEVRARI…LGIMASSRGA (146 aa)). Residue Y126 is the O-(5'-phospho-DNA)-tyrosine intermediate of the active site. Mg(2+) is bound by residues E219 and D272.

It belongs to the TOP6A family. Interacts with TOP6B. Mg(2+) serves as cofactor. In terms of tissue distribution, highly expressed in flowers before pollination. Expressed in roots and shoots.

It localises to the nucleus. The catalysed reaction is ATP-dependent breakage, passage and rejoining of double-stranded DNA.. In terms of biological role, required for meiotic recombination. Mediates DNA cleavage that forms the double-strand breaks (DSB) that initiate meiotic recombination. The chain is Meiotic recombination protein SPO11-2 (SPO11-2) from Oryza sativa subsp. indica (Rice).